Here is a 624-residue protein sequence, read N- to C-terminus: MNMKGQETRGFQSEVKQLLHLMIHSLYSNKEIFLRELISNASDAADKLRFRALSNPELFEGDGELRVRLSFDKEKRTLTLSDNGIGMTRDEVIDNLGTIAKSGTKAFLESIGSDQAKDSQLIGQFGVGFYSAFIVADKVTVRTRAAGAPADTGVFWESAGEGDYTIADITKDERGTEITLHLREGEDEYLDDWRLRSVISKYSDHIALPVEIQVKNEEDGTVTWEKINKAQALWTRGKAEISDDEYKAFYKHIAHDFTDPLSWSHNRVEGKQEYTSLLYIPAQAPWDMWNRDHKHGLKLYVQRVFIMDEAEQFMPNYLRFVRGLIDSNDLPLNVSREILQDSRITQNLRSALTKRVLQMLEKLAKDDAEKYQQFWQQFGMALKEGPAEDGSNKETIAKLLRFASTHTDSSAQTVSLEDYVSRMAEGQEKIYYITADSYAAAKSSPHLELFRKKGIEVLLLSDRIDEWMMSYLTEFEGKAFQSVSKADDSLNKLADEENPEQQEAEKALEPFVERVKTLLGERVKDVRLTHRLTDTPAIVTTDADEMSTQMAKLFAAAGQQAPEVKYIFELNPDHGLVKRAAEVTDDTQFAQWVELLLDQALLAERGTLEDPNQFIRRMNQLLTA.

An a; substrate-binding region spans residues 1–336 (MNMKGQETRG…SNDLPLNVSR (336 aa)). The b stretch occupies residues 337–552 (EILQDSRITQ…ADEMSTQMAK (216 aa)). The segment at 553–624 (LFAAAGQQAP…IRRMNQLLTA (72 aa)) is c.

It belongs to the heat shock protein 90 family. Homodimer.

It localises to the cytoplasm. Functionally, molecular chaperone. Has ATPase activity. The sequence is that of Chaperone protein HtpG from Yersinia pestis bv. Antiqua (strain Antiqua).